The chain runs to 455 residues: DNA N(6)-methyladenine demethylase ALKBH1C (455 aa).

2 disordered regions span residues Met-1–Asn-114 and Ser-173–Ser-194. The Fe2OG dioxygenase domain maps to Leu-345–Tyr-455. Asn-352–Tyr-354 is a binding site for 2-oxoglutarate. Residues His-363, Asp-365, and His-423 each contribute to the Fe cation site. Arg-447–Arg-453 serves as a coordination point for 2-oxoglutarate.

Belongs to the alkB family. Fe(2+) serves as cofactor. As to expression, expressed at low levels in roots and seedlings, but barely in cauline leaves, rosette leaves, stems, siliques and flowers.

The protein localises to the nucleus. It localises to the cytoplasm. The catalysed reaction is an N(6)-methyl-2'-deoxyadenosine in DNA + 2-oxoglutarate + O2 = a 2'-deoxyadenosine in DNA + formaldehyde + succinate + CO2. Functionally, dioxygenase that catalyzes DNA N(6)-methyladenine (6 mA) demethylation with a low efficiency. The sequence is that of DNA N(6)-methyladenine demethylase ALKBH1C from Arabidopsis thaliana (Mouse-ear cress).